The primary structure comprises 375 residues: MSETAVSIDSDRSKSEEEDEEEYSPPVQSSPSANFEKDRHLMYLEMMYELLPYHYQSQEINRLTLAHFIISGLHFLGARDRVDKDVVAKWVLSFQAFPTNRVSLKDGEFYGFFGSRSSQFPIDENGDLKHNGSHLASTYCALAILKVIGHDLSTIDSKSLLISMINLQQDDGSFMPIHIGGETDLRFVYCAAAICYMLDSWSGMDKESAKNYILNCQSYDGGFGLIPGSESHGGATYCAIASLRLMGYIGVDLLSNDSSSSIIDPSLLLNWCLQRQANDGGFQGRTNKPSDTCYAFWIGAVLKLIGGDALIDKMALRKFLMSCQSKYGGFSKFPGQLPDLYHSYYGYTAFSLLEEQGLSPLCPELGLPLLAAPGI.

Positions 1–33 are disordered; it reads MSETAVSIDSDRSKSEEEDEEEYSPPVQSSPSA. Serine 2 bears the N-acetylserine mark. 4 PFTB repeats span residues 157 to 199, 206 to 247, 265 to 306, and 313 to 354; these read SKSL…YMLD, KESA…RLMG, PSLL…KLIG, and KMAL…SLLE. Geranylgeranyl diphosphate-binding positions include 232 to 234 and 285 to 288; these read HGG and RTNK. The Zn(2+) site is built by aspartate 291 and cysteine 293. Residue 294-297 coordinates geranylgeranyl diphosphate; it reads YAFW. Zn(2+) is bound at residue histidine 342.

This sequence belongs to the protein prenyltransferase subunit beta family. As to quaternary structure, heterodimer of an alpha and a beta subunit. Zn(2+) serves as cofactor. Requires Mg(2+) as cofactor. As to expression, expressed in roots, leaves, stems, flowers and siliques.

It carries out the reaction geranylgeranyl diphosphate + L-cysteinyl-[protein] = S-geranylgeranyl-L-cysteinyl-[protein] + diphosphate. Functionally, catalyzes the transfer of a geranyl-geranyl moiety from geranyl-geranyl pyrophosphate to a cysteine at the fourth position from the C-terminus of proteins having the C-terminal sequence Cys-aliphatic-aliphatic-X (CaaX). Seems to exclusively prenylate CaaX substrates with leucine in the terminal position. The beta subunit is responsible for peptide-binding. May negatively regulate abscisic acid (ABA) signaling in guard cells and auxin-induced lateral root initiation. Negatively regulates ABA signaling in guard cells. in negative regulation of auxin-induced lateral root initiation. In Arabidopsis thaliana (Mouse-ear cress), this protein is Geranylgeranyl transferase type-1 subunit beta (GGB).